We begin with the raw amino-acid sequence, 33 residues long: Photosystem II reaction center protein Psb30 (33 aa).

Residues 5 to 25 (VIAQLASLALIIVLGPLVIGL) form a helical membrane-spanning segment.

This sequence belongs to the Psb30/Ycf12 family. As to quaternary structure, PSII is composed of 1 copy each of membrane proteins PsbA, PsbB, PsbC, PsbD, PsbE, PsbF, PsbH, PsbI, PsbJ, PsbK, PsbL, PsbM, PsbT, PsbX, PsbY, PsbZ, Psb30/Ycf12, peripheral proteins of the oxygen-evolving complex and a large number of cofactors. It forms dimeric complexes.

Its subcellular location is the plastid. It localises to the chloroplast thylakoid membrane. Its function is as follows. A core subunit of photosystem II (PSII), probably helps stabilize the reaction center. In Chara vulgaris (Common stonewort), this protein is Photosystem II reaction center protein Psb30.